A 506-amino-acid chain; its full sequence is Carboxyl-terminal PDZ ligand of neuronal nitric oxide synthase protein (506 aa).

The 171-residue stretch at 26 to 196 (FQHGICFEAK…ESERNSNSSG (171 aa)) folds into the PID domain. Disordered regions lie at residues 175 to 224 (HTQQ…VEVP) and 241 to 260 (DAVG…HPQE). Residues Ser-188, Ser-192, and Ser-195 each carry the phosphoserine modification. A compositionally biased stretch (low complexity) spans 203–213 (TGAERASTATA). At Ser-266 the chain carries Phosphoserine. Residues 322–363 (AAEAAARLEAQARVHQLLLQNKDMLQHISLLVKQVQELELKL) adopt a coiled-coil conformation. Ser-371, Ser-374, Ser-401, and Ser-417 each carry phosphoserine. The interaction with NOS1 stretch occupies residues 494–506 (QELGDGLDDEIAV). The PDZ-binding motif lies at 504–506 (IAV).

Interacts with the PDZ domain of NOS1 or the second PDZ domain of DLG4 through its C-terminus. Interacts with RASD1 and SYN1, SYN2 and SYN3 via its PID domain. Forms a ternary complex with NOS1 and RASD1. Forms a ternary complex with NOS1 and SYN1. Expressed in kidney glomeruli podocytes.

The protein localises to the cell projection. It is found in the filopodium. The protein resides in the podosome. In terms of biological role, adapter protein involved in neuronal nitric-oxide (NO) synthesis regulation via its association with nNOS/NOS1. The complex formed with NOS1 and synapsins is necessary for specific NO and synapsin functions at a presynaptic level. Mediates an indirect interaction between NOS1 and RASD1 leading to enhance the ability of NOS1 to activate RASD1. Competes with DLG4 for interaction with NOS1, possibly affecting NOS1 activity by regulating the interaction between NOS1 and DLG4. In kidney podocytes, plays a role in podosomes and filopodia formation through CDC42 activation. The protein is Carboxyl-terminal PDZ ligand of neuronal nitric oxide synthase protein of Homo sapiens (Human).